Reading from the N-terminus, the 808-residue chain is Enhancer of polycomb homolog 2 (808 aa).

Glycyl lysine isopeptide (Lys-Gly) (interchain with G-Cter in SUMO2) cross-links involve residues lysine 135, lysine 195, and lysine 324. The interval 337–357 (YPKKPKAEAGIAPQQPTPETL) is disordered. A Glycyl lysine isopeptide (Lys-Gly) (interchain with G-Cter in SUMO2) cross-link involves residue lysine 362. Disordered regions lie at residues 371 to 397 (QSSDEDEFPQVLSPASEAEEENDPDGS), 595 to 630 (QRQQLAQLHQKQQSQHSSQQTHPKAQGSSTSDCMSK), and 645 to 682 (VSAPVPSRSEGSKEQNTGHNNMNGVVQPSGPSKTLYST). Residues 595–614 (QRQQLAQLHQKQQSQHSSQQ) are compositionally biased toward low complexity. Polar residues-rich tracts occupy residues 615–630 (THPKAQGSSTSDCMSK) and 658–682 (EQNTGHNNMNGVVQPSGPSKTLYST). Position 755 is a phosphoserine (serine 755).

This sequence belongs to the enhancer of polycomb family.

It localises to the nucleus. In terms of biological role, may play a role in transcription or DNA repair. The sequence is that of Enhancer of polycomb homolog 2 (Epc2) from Mus musculus (Mouse).